Consider the following 111-residue polypeptide: Translation initiation factor 1A (111 aa).

Over residues 1–13 the composition is skewed to basic residues; it reads MKKSNNKNNHKNN. Residues 1–30 form a disordered region; it reads MKKSNNKNNHKNNHNNNQGGENIRVRSPRR. One can recognise an S1-like domain in the interval 23–96; the sequence is IRVRSPRRGE…EKADVIWRYT (74 aa).

It belongs to the eIF-1A family.

Its function is as follows. Seems to be required for maximal rate of protein biosynthesis. Enhances ribosome dissociation into subunits and stabilizes the binding of the initiator Met-tRNA(I) to 40 S ribosomal subunits. This chain is Translation initiation factor 1A, found in Methanosphaera stadtmanae (strain ATCC 43021 / DSM 3091 / JCM 11832 / MCB-3).